The chain runs to 2109 residues: General transcription factor 3C polypeptide 1 (2109 aa).

Positions 467–521 (LPEGEDTFLSESDSEEERSSSKRRGRGSQKDTRASANLRPKTQPHHSTPTKGGWK) are disordered. Residues 469 to 482 (EGEDTFLSESDSEE) are compositionally biased toward acidic residues. K529 is covalently cross-linked (Glycyl lysine isopeptide (Lys-Gly) (interchain with G-Cter in SUMO2)). Residues 586 to 609 (MENPKESSSSLKTGRHSSGQDKPH) are disordered. Residue S667 is modified to Phosphoserine. Polar residues predominate over residues 718–727 (STANRVKTSQ). The segment at 718–775 (STANRVKTSQPPVPQGEAEEDSQGKEGPSGSGDSQLSASSRSESGRMKKSDNKMGITP) is disordered. S739 carries the phosphoserine modification. A compositionally biased stretch (low complexity) spans 748 to 759 (SGDSQLSASSRS). Residues 760 to 769 (ESGRMKKSDN) are compositionally biased toward basic and acidic residues. Glycyl lysine isopeptide (Lys-Gly) (interchain with G-Cter in SUMO2) cross-links involve residues K770 and K833. Disordered regions lie at residues 836-857 (SGRA…SEAP) and 1059-1082 (RKNS…ESAM). Residues S1062 and S1068 each carry the phosphoserine modification. The segment covering 1073 to 1082 (SLQKEQESAM) has biased composition (basic and acidic residues). Residue K1142 forms a Glycyl lysine isopeptide (Lys-Gly) (interchain with G-Cter in SUMO2) linkage. Residues 1202 to 1241 (SLDRNRRVRGGKSQKRKRLKKDPGKKIKRKKKGEFPGEKS) form a disordered region. Over residues 1207–1221 (RRVRGGKSQKRKRLK) the composition is skewed to basic residues. Phosphoserine is present on residues S1253 and S1611. The interval 1608–1631 (KDGSLEDDEDEEDDLDEGVGGKRR) is disordered. Residues 1612–1624 (LEDDEDEEDDLDE) show a composition bias toward acidic residues. 2 positions are modified to phosphoserine: S1632 and S1653. Over residues 1823–1833 (EDADIQREDPQ) the composition is skewed to basic and acidic residues. The disordered stretch occupies residues 1823-1961 (EDADIQREDP…GSEDPRGFTE (139 aa)). Residues 1838-1848 (EGSSSEDSPPE) are compositionally biased toward low complexity. A phosphoserine mark is found at S1856, S1865, S1868, S1896, and S1911. Residues 1916 to 1926 (LEDTAAAGAAQ) are compositionally biased toward low complexity. Over residues 1937–1947 (SPGQEQLSGQA) the composition is skewed to polar residues. At S1969 the chain carries Phosphoserine.

The protein belongs to the TFIIIC subunit 1 family. Part of the TFIIIC subcomplex TFIIIC2, consisting of six subunits, GTF3C1, GTF3C2, GTF3C3, GTF3C4, GTF3C5 and GTF3C6. Interacts with IGHMBP2. Interacts with MAF1.

The protein localises to the nucleus. In terms of biological role, required for RNA polymerase III-mediated transcription. Component of TFIIIC that initiates transcription complex assembly on tRNA and is required for transcription of 5S rRNA and other stable nuclear and cytoplasmic RNAs. Binds to the box B promoter element. This Homo sapiens (Human) protein is General transcription factor 3C polypeptide 1 (GTF3C1).